The following is a 118-amino-acid chain: Large ribosomal subunit protein uL18 (118 aa).

This sequence belongs to the universal ribosomal protein uL18 family. In terms of assembly, part of the 50S ribosomal subunit; part of the 5S rRNA/L5/L18/L25 subcomplex. Contacts the 5S and 23S rRNAs.

In terms of biological role, this is one of the proteins that bind and probably mediate the attachment of the 5S RNA into the large ribosomal subunit, where it forms part of the central protuberance. This Rickettsia akari (strain Hartford) protein is Large ribosomal subunit protein uL18.